Here is a 240-residue protein sequence, read N- to C-terminus: Aliphatic sulfonates import ATP-binding protein SsuB (240 aa).

The 222-residue stretch at 6–227 (IQLSKLRKNF…VKDRHFACFE (222 aa)) folds into the ABC transporter domain. 38 to 45 (GESGCGKS) contacts ATP.

It belongs to the ABC transporter superfamily. Aliphatic sulfonates importer (TC 3.A.1.17.2) family. In terms of assembly, the complex is composed of two ATP-binding proteins (SsuB), two transmembrane proteins (SsuC) and a solute-binding protein (SsuA).

The protein localises to the cell inner membrane. The catalysed reaction is ATP + H2O + aliphatic sulfonate-[sulfonate-binding protein]Side 1 = ADP + phosphate + aliphatic sulfonateSide 2 + [sulfonate-binding protein]Side 1.. In terms of biological role, part of the ABC transporter complex SsuABC involved in aliphatic sulfonates import. Responsible for energy coupling to the transport system. The protein is Aliphatic sulfonates import ATP-binding protein SsuB of Zymomonas mobilis subsp. mobilis (strain ATCC 31821 / ZM4 / CP4).